A 731-amino-acid polypeptide reads, in one-letter code: Radial spoke head 10 homolog B (731 aa).

The segment at 1 to 69 (MARGDNMKSS…PNENQPIGEH (69 aa)) is disordered. Over residues 7–17 (MKSSNKSTPEP) the composition is skewed to polar residues. 2 stretches are compositionally biased toward low complexity: residues 18-36 (TLSK…SESV) and 46-57 (SSSAVCSASTVS). MORN repeat units lie at residues 86-108 (YEGE…GGHV), 109-131 (YKGS…DGLK), 132-154 (YQGD…NGST), 155-177 (YEGE…KTLT), 179-201 (YRGQ…QEAT), 204-226 (YKGE…SGNV), 227-249 (YEGQ…DLDQ), 251-273 (YSGQ…RKRA), 284-306 (YTGD…SGAL), and 307-329 (YCGQ…NGRV). Disordered regions lie at residues 353 to 377 (TTPF…SPLG) and 709 to 731 (KQEQ…TSIH). Residues 363–377 (SKGASQSSSNASPLG) show a composition bias toward low complexity. Over residues 722-731 (VTTTSVTSIH) the composition is skewed to polar residues.

It localises to the cytoplasm. It is found in the cytoskeleton. The protein resides in the cilium axoneme. Its subcellular location is the cell projection. The protein localises to the cilium. It localises to the flagellum. Its function is as follows. May function as part of axonemal radial spoke complexes. Radial spoke complexes are important for ciliary motility. The sequence is that of Radial spoke head 10 homolog B (rsph10b) from Danio rerio (Zebrafish).